The primary structure comprises 307 residues: D-alanine--D-alanine ligase (307 aa).

Positions 110-299 constitute an ATP-grasp domain; it reads KQLWKGAGLP…FDVLVGEILL (190 aa). 136-185 is an ATP binding site; sequence PVIVKPAHEGSSIGMAKADNTEELGEALVAAEKFDQDVLVEAWVNGPEYT. Mg(2+)-binding residues include aspartate 253, glutamate 266, and asparagine 268.

The protein belongs to the D-alanine--D-alanine ligase family. Mg(2+) serves as cofactor. It depends on Mn(2+) as a cofactor.

It is found in the cytoplasm. It catalyses the reaction 2 D-alanine + ATP = D-alanyl-D-alanine + ADP + phosphate + H(+). It functions in the pathway cell wall biogenesis; peptidoglycan biosynthesis. In terms of biological role, cell wall formation. This Alcanivorax borkumensis (strain ATCC 700651 / DSM 11573 / NCIMB 13689 / SK2) protein is D-alanine--D-alanine ligase.